The following is a 173-amino-acid chain: Crossover junction endodeoxyribonuclease RuvC (173 aa).

Residues aspartate 8, glutamate 67, and aspartate 139 contribute to the active site. Mg(2+) contacts are provided by aspartate 8, glutamate 67, and aspartate 139.

This sequence belongs to the RuvC family. Homodimer which binds Holliday junction (HJ) DNA. The HJ becomes 2-fold symmetrical on binding to RuvC with unstacked arms; it has a different conformation from HJ DNA in complex with RuvA. In the full resolvosome a probable DNA-RuvA(4)-RuvB(12)-RuvC(2) complex forms which resolves the HJ. Mg(2+) is required as a cofactor.

The protein resides in the cytoplasm. The enzyme catalyses Endonucleolytic cleavage at a junction such as a reciprocal single-stranded crossover between two homologous DNA duplexes (Holliday junction).. Its function is as follows. The RuvA-RuvB-RuvC complex processes Holliday junction (HJ) DNA during genetic recombination and DNA repair. Endonuclease that resolves HJ intermediates. Cleaves cruciform DNA by making single-stranded nicks across the HJ at symmetrical positions within the homologous arms, yielding a 5'-phosphate and a 3'-hydroxyl group; requires a central core of homology in the junction. The consensus cleavage sequence is 5'-(A/T)TT(C/G)-3'. Cleavage occurs on the 3'-side of the TT dinucleotide at the point of strand exchange. HJ branch migration catalyzed by RuvA-RuvB allows RuvC to scan DNA until it finds its consensus sequence, where it cleaves and resolves the cruciform DNA. This chain is Crossover junction endodeoxyribonuclease RuvC, found in Vibrio atlanticus (strain LGP32) (Vibrio splendidus (strain Mel32)).